The following is a 98-amino-acid chain: Alpha-defensin 1 (98 aa).

An N-terminal signal peptide occupies residues 1-19 (MRTLTLLTALLLLALQVQT). The propeptide occupies 20 to 63 (QSLEETADQVPAQDQPGAEAQDITISFAGDERSAREASKSLIGT). 3 disulfides stabilise this stretch: C66/C96, C68/C84, and C74/C95.

This sequence belongs to the alpha-defensin family. Paneth cells of the small bowel.

The protein resides in the secreted. In terms of biological role, has broad-spectrum antimicrobial properties. The antimicrobial activity decreases in the present of salt in vitro. Binds anionic phospholipids, which leads to the aggregation of liposomes in vitro. Membrane permeabilization of the target cells is an essential part of the peptide's mode of antimicrobial activity. No hemolytic activity against sheep or horse erythrocytes. Has antibacterial activity against the bacterial horse pathogens Gram-positive R.equi ATCC 33701 P(-) (minimum bactericidal concentration or MBC=5 ug/ml) and R.equi ATCC 33701 P(+) (MBC=5 ug/ml), which are resistant against beta-lactam antibiotics. Also has antibacterial activity against highly infectious wild-type strain R.equi 85F P(+) (MBC=5 ug/ml), S.equi subsp. equi (MBC=5 ug/ml), S.equi subsp. zooepidemicus (MBC=5 ug/ml), S.dysgalactiae subsp. equisimilis (MBC=10 ug/ml), S.choleraesuis subsp. choleraesuis serovar Typhimurium (MBC=10 ug/ml), and P.multocida subsp. multocida (MBC=&gt;10 ug/ml). Probably contributes to the antimicrobial barrier function of the small bowel mucosa. The sequence is that of Alpha-defensin 1 from Equus caballus (Horse).